Consider the following 393-residue polypeptide: MNHSPQSARPVSIMRRFLDSEAAGGITLMAAAALALIVANSPFAQTYFDALHLYIGPLSLAHWINDALMAKFFLLVGLEIKREMLDGQLASWPNRMLPGIAAAGGVILPAIIFAVLNHDNPAKLRGWAVPSATDIAFALGVLSLLGSRAPSSLKVFLATLAILDDLAAVVIIAIFYTAEISMPYLGAAFITAAVLFVMNRMGVVKLLPYLISAVILWFFVFNSGVHATVAGVVAALMIPLKPAPGRPDDMTSPLHKLEHTLAKPVAFIVVPIFGFANAGISFKGLEASVLGDTLTLGILLGLFLGKQFGVFGAAWLAIKTGLAEKPMGASWVQLYGVAILCGIGFTMSIFIGLLSFPSDLMQTETKIGVLSGSALSAICGYLLLRAAARPKRG.

The next 12 membrane-spanning stretches (helical) occupy residues 23-43, 58-78, 96-116, 126-146, 155-175, 178-198, 201-221, 224-244, 265-285, 298-318, 334-354, and 367-387; these read AGGI…NSPF, LSLA…LVGL, MLPG…FAVL, GWAV…SLLG, VFLA…IAIF, AEIS…LFVM, MGVV…FFVF, GVHA…KPAP, VAFI…FKGL, ILLG…WLAI, LYGV…IGLL, and IGVL…LRAA.

It belongs to the NhaA Na(+)/H(+) (TC 2.A.33) antiporter family.

The protein localises to the cell inner membrane. The enzyme catalyses Na(+)(in) + 2 H(+)(out) = Na(+)(out) + 2 H(+)(in). Its function is as follows. Na(+)/H(+) antiporter that extrudes sodium in exchange for external protons. The sequence is that of Na(+)/H(+) antiporter NhaA from Brucella suis (strain ATCC 23445 / NCTC 10510).